Here is a 231-residue protein sequence, read N- to C-terminus: tRNA (guanine-N(1)-)-methyltransferase (231 aa).

S-adenosyl-L-methionine is bound by residues glycine 114 and 134-139 (IGDYVL).

This sequence belongs to the RNA methyltransferase TrmD family. As to quaternary structure, homodimer.

It is found in the cytoplasm. It catalyses the reaction guanosine(37) in tRNA + S-adenosyl-L-methionine = N(1)-methylguanosine(37) in tRNA + S-adenosyl-L-homocysteine + H(+). Its function is as follows. Specifically methylates guanosine-37 in various tRNAs. The protein is tRNA (guanine-N(1)-)-methyltransferase of Clostridioides difficile (strain 630) (Peptoclostridium difficile).